The sequence spans 220 residues: Deoxyribose-phosphate aldolase (220 aa).

The Proton donor/acceptor role is filled by Asp89. Residue Lys151 is the Schiff-base intermediate with acetaldehyde of the active site. The active-site Proton donor/acceptor is the Lys180.

This sequence belongs to the DeoC/FbaB aldolase family. DeoC type 1 subfamily.

It is found in the cytoplasm. The catalysed reaction is 2-deoxy-D-ribose 5-phosphate = D-glyceraldehyde 3-phosphate + acetaldehyde. Its pathway is carbohydrate degradation; 2-deoxy-D-ribose 1-phosphate degradation; D-glyceraldehyde 3-phosphate and acetaldehyde from 2-deoxy-alpha-D-ribose 1-phosphate: step 2/2. Catalyzes a reversible aldol reaction between acetaldehyde and D-glyceraldehyde 3-phosphate to generate 2-deoxy-D-ribose 5-phosphate. The protein is Deoxyribose-phosphate aldolase of Streptococcus suis (strain 05ZYH33).